Here is a 515-residue protein sequence, read N- to C-terminus: Probable malate:quinone oxidoreductase (515 aa).

The protein belongs to the MQO family. The cofactor is FAD.

It catalyses the reaction (S)-malate + a quinone = a quinol + oxaloacetate. It functions in the pathway carbohydrate metabolism; tricarboxylic acid cycle; oxaloacetate from (S)-malate (quinone route): step 1/1. This Blochmanniella pennsylvanica (strain BPEN) protein is Probable malate:quinone oxidoreductase.